A 514-amino-acid polypeptide reads, in one-letter code: MHAQVQTQEHSASGSLRFNGIGKTFPGVKALDGISFVAHPGQVHALMGENGAGKSTLLKILGGAYIPSSGELQIGEQTMAFKSTADSIGSGVAVIHQELHLVPEMTVAENLFLGHLPASFGLINRGALRQQALACLKGLADEIDPQTKVGRLSLGQRQLVEIAKALSRGAHVIAFDEPTSSLSAREIDRLMAIIGRLRDEGKVVLYVSHRMEEVFRICDAVTVFKDGRYVRTFDDMSQLTHDQLVTCMVGRDIQDIYDYRGRPRGAVALRVDGLLGPGLREPISFDAHKGEILGLFGLVGAGRTELFRLLSGLERNTAGRLELRGHELKLRSPRDAIAAGILLCPEDRKKEGIIPLASVAENINISARGAHSGLGCLLRGIWEKGNAEKQIKALKVKTPHAGQQIKFLSGGNQQKAILGRWLSMPMKVLLLDEPTRGIDIGAKAEIYQIIHNLAADGISVIVVSSDLMEVMGISDRILVLCEGALRGEVSRDQANESNLLQLALPRHRADGVAN.

ABC transporter domains follow at residues 16 to 251 and 251 to 507; these read LRFN…MVGR and RDIQ…LPRH. 48-55 lines the ATP pocket; sequence GENGAGKS.

This sequence belongs to the ABC transporter superfamily. Arabinose importer (TC 3.A.1.2.2) family. The complex is composed of two ATP-binding proteins (AraG), two transmembrane proteins (AraH) and a solute-binding protein (AraF).

Its subcellular location is the cell inner membrane. The enzyme catalyses L-arabinose(out) + ATP + H2O = L-arabinose(in) + ADP + phosphate + H(+). In terms of biological role, part of the ABC transporter complex AraFGH involved in arabinose import. Responsible for energy coupling to the transport system. This is Arabinose import ATP-binding protein AraG from Pseudomonas fluorescens (strain Pf0-1).